The following is a 596-amino-acid chain: Probable translation initiation factor IF-2 (596 aa).

The tr-type G domain maps to 3-220 (IRSPIVSVLG…MLLGLAQEYL (218 aa)). Positions 12-19 (GHVDHGKT) are G1. GTP is bound at residue 12–19 (GHVDHGKT). The tract at residues 37-41 (GITQH) is G2. Residues 76 to 79 (DTPG) form a G3 region. Residues 76–80 (DTPGH) and 130–133 (NKID) each bind GTP. The segment at 130–133 (NKID) is G4. The segment at 198 to 200 (SAK) is G5.

Belongs to the TRAFAC class translation factor GTPase superfamily. Classic translation factor GTPase family. IF-2 subfamily.

Function in general translation initiation by promoting the binding of the formylmethionine-tRNA to ribosomes. Seems to function along with eIF-2. The polypeptide is Probable translation initiation factor IF-2 (Methanobrevibacter smithii (strain ATCC 35061 / DSM 861 / OCM 144 / PS)).